A 146-amino-acid chain; its full sequence is Ribonuclease H (146 aa).

The 142-residue stretch at Met1 to Asp142 folds into the RNase H type-1 domain. 4 residues coordinate Mg(2+): Asp9, Glu47, Asp70, and Asp134.

Belongs to the RNase H family. In terms of assembly, monomer. Mg(2+) serves as cofactor.

It localises to the cytoplasm. It catalyses the reaction Endonucleolytic cleavage to 5'-phosphomonoester.. In terms of biological role, endonuclease that specifically degrades the RNA of RNA-DNA hybrids. The chain is Ribonuclease H from Ruthia magnifica subsp. Calyptogena magnifica.